Here is a 127-residue protein sequence, read N- to C-terminus: Histone H2B.2 (127 aa).

Residues 1-35 (MAPKAEKKPASKAPAAKKTTASTDASKKRTKTRKE) form a disordered region. An N6-acetyllysine; alternate mark is found at K7 and K8. Residues K7 and K8 each participate in a glycyl lysine isopeptide (Lys-Gly) (interchain with G-Cter in SUMO); alternate cross-link. S11 is subject to Phosphoserine. Low complexity predominate over residues 11 to 24 (SKAPAAKKTTASTD). K12 carries the N6-acetyllysine modification. A Glycyl lysine isopeptide (Lys-Gly) (interchain with G-Cter in ubiquitin) cross-link involves residue K120.

It belongs to the histone H2B family. The nucleosome is a histone octamer containing two molecules each of H2A, H2B, H3 and H4 assembled in one H3-H4 heterotetramer and two H2A-H2B heterodimers. The octamer wraps approximately 147 bp of DNA. In terms of processing, monoubiquitinated by the UBC2-BRE1 complex to form H2BK123ub1. H2BK123ub1 gives a specific tag for epigenetic transcriptional activation and is also prerequisite for H3K4me and H3K79me formation. H2BK123ub1 also modulates the formation of double-strand breaks during meiosis and is a prerequisite for DNA-damage checkpoint activation. Phosphorylated by STE20 to form H2BS10ph during progression through meiotic prophase. May be correlated with chromosome condensation. Post-translationally, acetylation of N-terminal lysines and particularly formation of H2BK11ac has a positive effect on transcription. In terms of processing, sumoylation to form H2BK6su or H2BK7su occurs preferentially near the telomeres and represses gene transcription.

It localises to the nucleus. It is found in the chromosome. Core component of nucleosome. Nucleosomes wrap and compact DNA into chromatin, limiting DNA accessibility to the cellular machineries which require DNA as a template. Histones thereby play a central role in transcription regulation, DNA repair, DNA replication and chromosomal stability. DNA accessibility is regulated via a complex set of post-translational modifications of histones, also called histone code, and nucleosome remodeling. This chain is Histone H2B.2 (HTB2), found in Eremothecium gossypii (strain ATCC 10895 / CBS 109.51 / FGSC 9923 / NRRL Y-1056) (Yeast).